The primary structure comprises 462 residues: DEK domain-containing chromatin-associated protein 1 (462 aa).

2 disordered regions span residues 18 to 91 (AVTE…TQGR) and 212 to 390 (KETK…RKEL). Basic and acidic residues predominate over residues 20–32 (TEKDTETKKKDEV). Positions 33–46 (EKDEAMEEKGEEID) are enriched in acidic residues. Residues 77-91 (PRSSGNKPLSITQGR) are compositionally biased toward polar residues. The segment covering 267–276 (NGEDDVAPEE) has biased composition (acidic residues). 3 stretches are compositionally biased toward basic and acidic residues: residues 277 to 303 (ENNK…TDKK), 312 to 322 (EKPAAEEEKSI), and 347 to 360 (QKVD…EKGK). The Nuclear localization signal motif lies at 344 to 351 (SKKQKVDK). Residues 384–439 (EPTRKELHVVVTKILKEVDFNTATLSDILRKLGSHFGIDLMHRKAEVKDIITDAIN) form the DEK-C domain. 2 DNA-binding regions span residues 402-416 (DFNT…RKLG) and 431-435 (KDIIT). Residues 438–462 (INEMSDDDDEKEEDTEDEGEKEGKD) are disordered. Acidic residues predominate over residues 441-462 (MSDDDDEKEEDTEDEGEKEGKD).

Found in a mRNA splicing-dependent exon junction complex (EJC). Binds specifically histones H3 and H4.

It is found in the nucleus. Its subcellular location is the nucleolus. Functionally, chromatin-associated protein which contributes to the modulation of chromatin structure (such as super-helical structure of DNA) and function. Binds to chromatin of protein-coding genes throughout the genome to regulate nucleosome occupancy and chromatin accessibility, and to modulate the expression of target genes. This chain is DEK domain-containing chromatin-associated protein 1, found in Arabidopsis thaliana (Mouse-ear cress).